The sequence spans 115 residues: Large ribosomal subunit protein uL22c (115 aa).

It belongs to the universal ribosomal protein uL22 family. Part of the 50S ribosomal subunit.

The protein localises to the plastid. Its subcellular location is the chloroplast. This protein binds specifically to 23S rRNA. Functionally, the globular domain of the protein is located near the polypeptide exit tunnel on the outside of the subunit, while an extended beta-hairpin is found that lines the wall of the exit tunnel in the center of the 70S ribosome. This is Large ribosomal subunit protein uL22c (rpl22) from Phaeodactylum tricornutum (strain CCAP 1055/1).